The following is a 616-amino-acid chain: Dihydroxy-acid dehydratase (616 aa).

Mg(2+) is bound at residue Asp-81. Residue Cys-122 coordinates [2Fe-2S] cluster. Asp-123 and Lys-124 together coordinate Mg(2+). Position 124 is an N6-carboxylysine (Lys-124). Cys-195 contacts [2Fe-2S] cluster. Glu-491 contributes to the Mg(2+) binding site. Ser-517 serves as the catalytic Proton acceptor.

This sequence belongs to the IlvD/Edd family. As to quaternary structure, homodimer. [2Fe-2S] cluster is required as a cofactor. The cofactor is Mg(2+).

It catalyses the reaction (2R)-2,3-dihydroxy-3-methylbutanoate = 3-methyl-2-oxobutanoate + H2O. It carries out the reaction (2R,3R)-2,3-dihydroxy-3-methylpentanoate = (S)-3-methyl-2-oxopentanoate + H2O. Its pathway is amino-acid biosynthesis; L-isoleucine biosynthesis; L-isoleucine from 2-oxobutanoate: step 3/4. The protein operates within amino-acid biosynthesis; L-valine biosynthesis; L-valine from pyruvate: step 3/4. Its function is as follows. Functions in the biosynthesis of branched-chain amino acids. Catalyzes the dehydration of (2R,3R)-2,3-dihydroxy-3-methylpentanoate (2,3-dihydroxy-3-methylvalerate) into 2-oxo-3-methylpentanoate (2-oxo-3-methylvalerate) and of (2R)-2,3-dihydroxy-3-methylbutanoate (2,3-dihydroxyisovalerate) into 2-oxo-3-methylbutanoate (2-oxoisovalerate), the penultimate precursor to L-isoleucine and L-valine, respectively. This chain is Dihydroxy-acid dehydratase, found in Photorhabdus laumondii subsp. laumondii (strain DSM 15139 / CIP 105565 / TT01) (Photorhabdus luminescens subsp. laumondii).